We begin with the raw amino-acid sequence, 285 residues long: Glutamate racemase (285 aa).

Residues 28 to 29 (DS) and 60 to 61 (YG) contribute to the substrate site. Cysteine 92 (proton donor/acceptor) is an active-site residue. Residue 93–94 (NT) participates in substrate binding. Residue cysteine 204 is the Proton donor/acceptor of the active site. A substrate-binding site is contributed by 205 to 206 (TH).

Belongs to the aspartate/glutamate racemases family.

It catalyses the reaction L-glutamate = D-glutamate. It functions in the pathway cell wall biogenesis; peptidoglycan biosynthesis. Functionally, provides the (R)-glutamate required for cell wall biosynthesis. This chain is Glutamate racemase, found in Escherichia coli O7:K1 (strain IAI39 / ExPEC).